A 311-amino-acid polypeptide reads, in one-letter code: Zeta-sarcoglycan (311 aa).

At 1–50 (MDRSTDLDIQELKMTREQYILATQQNNLPRPENAQLYPVGIYGWRKRCLY) the chain is on the cytoplasmic side. The helical; Signal-anchor for type II membrane protein transmembrane segment at 51–71 (FFVLLLLVTMIVNLAMTIWIL) threads the bilayer. Residues 72-311 (KVMNFTVDGM…QSSSSICLWN (240 aa)) lie on the Extracellular side of the membrane. N-linked (GlcNAc...) asparagine glycosylation is found at N75 and N123. An intrachain disulfide couples C285 to C301.

This sequence belongs to the sarcoglycan beta/delta/gamma/zeta family. In terms of tissue distribution, expressed in the heart, skeletal muscle and arterial vascular smooth muscle.

It localises to the cell membrane. The protein localises to the sarcolemma. Its subcellular location is the cytoplasm. The protein resides in the cytoskeleton. Component of the sarcoglycan complex, a subcomplex of the dystrophin-glycoprotein complex which forms a link between the F-actin cytoskeleton and the extracellular matrix. May play a role in the maintenance of striated muscle membrane stability. This Mus musculus (Mouse) protein is Zeta-sarcoglycan (Sgcz).